The following is a 505-amino-acid chain: Formate--tetrahydrofolate ligase (505 aa).

It belongs to the formate--tetrahydrofolate ligase family.

It catalyses the reaction (6S)-5,6,7,8-tetrahydrofolate + formate + ATP = (6R)-10-formyltetrahydrofolate + ADP + phosphate. The protein operates within one-carbon metabolism; tetrahydrofolate interconversion. This is Formate--tetrahydrofolate ligase (fhs) from Bifidobacterium longum (strain NCC 2705).